Here is a 172-residue protein sequence, read N- to C-terminus: Trypsin inhibitor DE-3 (172 aa).

Intrachain disulfides connect Cys39–Cys83 and Cys132–Cys139.

It belongs to the protease inhibitor I3 (leguminous Kunitz-type inhibitor) family.

Inhibition of trypsin. This is Trypsin inhibitor DE-3 from Erythrina caffra (Kaffir tree).